The sequence spans 427 residues: 3-phosphoshikimate 1-carboxyvinyltransferase (427 aa).

Lys22, Ser23, and Arg27 together coordinate 3-phosphoshikimate. Lys22 contacts phosphoenolpyruvate. The phosphoenolpyruvate site is built by Gly96 and Arg124. Positions 169, 170, 171, 197, 313, 336, and 340 each coordinate 3-phosphoshikimate. Residue Gln171 participates in phosphoenolpyruvate binding. Asp313 serves as the catalytic Proton acceptor. Positions 344, 386, and 411 each coordinate phosphoenolpyruvate.

Belongs to the EPSP synthase family. In terms of assembly, monomer.

Its subcellular location is the cytoplasm. It carries out the reaction 3-phosphoshikimate + phosphoenolpyruvate = 5-O-(1-carboxyvinyl)-3-phosphoshikimate + phosphate. It participates in metabolic intermediate biosynthesis; chorismate biosynthesis; chorismate from D-erythrose 4-phosphate and phosphoenolpyruvate: step 6/7. Functionally, catalyzes the transfer of the enolpyruvyl moiety of phosphoenolpyruvate (PEP) to the 5-hydroxyl of shikimate-3-phosphate (S3P) to produce enolpyruvyl shikimate-3-phosphate and inorganic phosphate. The protein is 3-phosphoshikimate 1-carboxyvinyltransferase of Escherichia coli O17:K52:H18 (strain UMN026 / ExPEC).